Reading from the N-terminus, the 350-residue chain is Glycosyltransferase 8 domain-containing protein 2 (350 aa).

At 1-6 (MALLRK) the chain is on the cytoplasmic side. The helical; Signal-anchor for type II membrane protein transmembrane segment at 7-24 (INQVLLFLLIVTLCGILY) threads the bilayer. Over 25-349 (KKVHKGTMLR…AGIFKLHHPN (325 aa)) the chain is Lumenal. N234 carries an N-linked (GlcNAc...) asparagine glycan.

Belongs to the glycosyltransferase 8 family.

It localises to the membrane. The sequence is that of Glycosyltransferase 8 domain-containing protein 2 (GLT8D2) from Bos taurus (Bovine).